The primary structure comprises 436 residues: Protein 60A (436 aa).

The first 27 residues, 1 to 27, serve as a signal peptide directing secretion; it reads MTASLVVLPSLWLILIIFTAPYTHCTQ. The propeptide occupies 28–317; it reads SGIYIDNGKD…STLHQRKKSK (290 aa). Residues Asn-102, Asn-114, Asn-217, and Asn-229 are each glycosylated (N-linked (GlcNAc...) asparagine). The segment at 293 to 322 is disordered; sequence IKSTSGHSTQKRTKRSTLHQRKKSKSEPVN. The segment covering 301 to 316 has biased composition (basic residues); the sequence is TQKRTKRSTLHQRKKS. 3 disulfides stabilise this stretch: Cys-335-Cys-401, Cys-364-Cys-433, and Cys-368-Cys-435. A glycan (N-linked (GlcNAc...) asparagine) is linked at Asn-377.

Belongs to the TGF-beta family. In terms of assembly, homodimer; disulfide-linked.

It localises to the secreted. The protein is Protein 60A (gbb) of Drosophila virilis (Fruit fly).